Reading from the N-terminus, the 95-residue chain is Phosphoribosyl-ATP pyrophosphatase (95 aa).

This sequence belongs to the PRA-PH family.

It is found in the cytoplasm. It catalyses the reaction 1-(5-phospho-beta-D-ribosyl)-ATP + H2O = 1-(5-phospho-beta-D-ribosyl)-5'-AMP + diphosphate + H(+). The protein operates within amino-acid biosynthesis; L-histidine biosynthesis; L-histidine from 5-phospho-alpha-D-ribose 1-diphosphate: step 2/9. This Halobacterium salinarum (strain ATCC 29341 / DSM 671 / R1) protein is Phosphoribosyl-ATP pyrophosphatase.